The primary structure comprises 316 residues: ATP synthase gamma chain (316 aa).

This sequence belongs to the ATPase gamma chain family. As to quaternary structure, F-type ATPases have 2 components, CF(1) - the catalytic core - and CF(0) - the membrane proton channel. CF(1) has five subunits: alpha(3), beta(3), gamma(1), delta(1), epsilon(1). CF(0) has three main subunits: a, b and c.

The protein localises to the cellular thylakoid membrane. Its function is as follows. Produces ATP from ADP in the presence of a proton gradient across the membrane. The gamma chain is believed to be important in regulating ATPase activity and the flow of protons through the CF(0) complex. This chain is ATP synthase gamma chain, found in Synechococcus sp. (strain ATCC 27144 / PCC 6301 / SAUG 1402/1) (Anacystis nidulans).